Consider the following 109-residue polypeptide: Large ribosomal subunit protein uL24 (109 aa).

Residues 85–109 form a disordered region; that stretch reads KYGTDPKTNKKVRLSRKTNNLVGGQ.

The protein belongs to the universal ribosomal protein uL24 family. In terms of assembly, part of the 50S ribosomal subunit.

In terms of biological role, one of two assembly initiator proteins, it binds directly to the 5'-end of the 23S rRNA, where it nucleates assembly of the 50S subunit. Its function is as follows. One of the proteins that surrounds the polypeptide exit tunnel on the outside of the subunit. This chain is Large ribosomal subunit protein uL24, found in Mycoplasmoides gallisepticum (strain R(low / passage 15 / clone 2)) (Mycoplasma gallisepticum).